A 165-amino-acid polypeptide reads, in one-letter code: ATP synthase subunit delta, mitochondrial (165 aa).

The transit peptide at 1-27 directs the protein to the mitochondrion; sequence MNSLRIARAALRVRPTAVRAPLQRRGY.

The protein belongs to the ATPase epsilon chain family. As to quaternary structure, F-type ATPases have 2 components, CF(1) - the catalytic core - and CF(0) - the membrane proton channel. CF(1) has five subunits: alpha(3), beta(3), gamma(1), delta(1), epsilon(1). CF(0) has three main subunits: a, b and c.

Its subcellular location is the mitochondrion. It localises to the mitochondrion inner membrane. Mitochondrial membrane ATP synthase (F(1)F(0) ATP synthase or Complex V) produces ATP from ADP in the presence of a proton gradient across the membrane which is generated by electron transport complexes of the respiratory chain. F-type ATPases consist of two structural domains, F(1) - containing the extramembraneous catalytic core, and F(0) - containing the membrane proton channel, linked together by a central stalk and a peripheral stalk. During catalysis, ATP turnover in the catalytic domain of F(1) is coupled via a rotary mechanism of the central stalk subunits to proton translocation. Part of the complex F(1) domain and of the central stalk which is part of the complex rotary element. Rotation of the central stalk against the surrounding alpha(3)beta(3) subunits leads to hydrolysis of ATP in three separate catalytic sites on the beta subunits. The protein is ATP synthase subunit delta, mitochondrial (des) of Neurospora crassa (strain ATCC 24698 / 74-OR23-1A / CBS 708.71 / DSM 1257 / FGSC 987).